Consider the following 818-residue polypeptide: BDNF/NT-3 growth factors receptor (818 aa).

The N-terminal stretch at 1-31 is a signal peptide; the sequence is MVSWRRRPGPGLARLWGLCCLVLGCWRGALG. 2 cysteine pairs are disulfide-bonded: Cys32/Cys38 and Cys36/Cys45. At 32-426 the chain is on the extracellular side; sequence CPASCRCSSW…DVSNKENEDS (395 aa). Asn66 is a glycosylation site (N-linked (GlcNAc...) asparagine). One copy of the LRR 1 repeat lies at 71–92; that stretch reads YIANQRKLESINDNEVGFYVGL. Asn94 is a glycosylation site (N-linked (GlcNAc...) asparagine). The LRR 2 repeat unit spans residues 95-116; the sequence is LTVVDSGLRFVSRQAFVKNINL. Asn120 carries N-linked (GlcNAc...) asparagine glycosylation. Intrachain disulfides connect Cys151-Cys175 and Cys153-Cys193. Residues 196–281 form the Ig-like C2-type 1 domain; sequence PSANLSNYNI…GEVQTSAELT (86 aa). Residues Asn199, Asn204, Asn226, Asn253, Asn287, Asn324, and Asn337 are each glycosylated (N-linked (GlcNAc...) asparagine). Cys217 and Cys265 are joined by a disulfide. The Ig-like C2-type 2 domain occupies 295–364; it reads TPDHHWCIPF…NGAYTLLAKN (70 aa). A disulfide bond links Cys301 and Cys344. The interval 384–394 is provides specificity for BDNF as ligand versus NTF3 and NTF4; the sequence is GSGPIVDPDVY. The span at 400 to 418 shows a compositional bias: polar residues; the sequence is PNDLGDTTNNSNQITSPDV. The tract at residues 400–420 is disordered; that stretch reads PNDLGDTTNNSNQITSPDVSN. Residue Asn408 is glycosylated (N-linked (GlcNAc...) asparagine). Residues 427-450 form a helical membrane-spanning segment; the sequence is ITVYVVVGIAALVCTGLVIMLIIL. The Cytoplasmic segment spans residues 451 to 818; the sequence is KFGRHSKFGM…ASPVYLDILG (368 aa). Positions 469 to 494 are disordered; that stretch reads NDDDSASPLHHISNGSNTPSSSEGGP. Over residues 481 to 491 the composition is skewed to polar residues; it reads SNGSNTPSSSE. Tyr512 carries the post-translational modification Phosphotyrosine; by autocatalysis. Positions 534-803 constitute a Protein kinase domain; that stretch reads IVLKRELGEG…LNIKEIHSLL (270 aa). ATP-binding positions include 540–548 and Lys568; that span reads LGEGAFGKV. The active-site Proton acceptor is Asp672. Residues Tyr698, Tyr702, Tyr703, and Tyr813 each carry the phosphotyrosine; by autocatalysis modification.

It belongs to the protein kinase superfamily. Tyr protein kinase family. Insulin receptor subfamily. As to quaternary structure, exists in a dynamic equilibrium between monomeric (low affinity) and dimeric (high affinity) structures. Interacts (phosphorylated upon activation by BDNF) with SHC1; mediates SHC1 phosphorylation and activation. Interacts (phosphorylated upon activation by BDNF) with PLCG1 and/or PLCG2; mediates PLCG1 phosphorylation and activation. Interacts with SH2B1 and SH2B2. Interacts with NGFR; may regulate the ligand specificity of the receptor. Interacts with SORCS2; this interaction is important for normal targeting to post-synaptic densities in response to high-frequency stimulation. Interacts (phosphorylated upon ligand-binding) with SH2D1A; regulates NTRK2. Interacts with SQSTM1 and KIDINS220. Interacts (phosphorylated upon ligand-binding) with FRS2; activates the MAPK signaling pathway. Interacts with APPL1. Interacts with MAPK8IP3/JIP3 and KLC1; interaction with KLC1 is mediated by MAPK8IP3/JIP3. Ligand-mediated auto-phosphorylation. In terms of tissue distribution, detected in embryonic brain and orsal root ganglia.

The protein localises to the cell membrane. It is found in the endosome membrane. The protein resides in the cell projection. It localises to the axon. Its subcellular location is the dendrite. The protein localises to the cytoplasm. It is found in the perinuclear region. The protein resides in the postsynaptic density. It carries out the reaction L-tyrosyl-[protein] + ATP = O-phospho-L-tyrosyl-[protein] + ADP + H(+). With respect to regulation, the neuronal activity and the influx of calcium positively regulate the kinase activity and the internalization of the receptor which are both important for active signaling. Regulated by NGFR that may control the internalization of the receptor. NGFR may also stimulate the activation by BDNF compared to NTF3 and NTF4. The formation of active receptors dimers able to fully transduce the ligand-mediated signal, may be negatively regulated by the formation of inactive heterodimers with the non-catalytic isoforms. In terms of biological role, receptor tyrosine kinase involved in the development and the maturation of the central and the peripheral nervous systems through regulation of neuron survival, proliferation, migration, differentiation, and synapse formation and plasticity. Receptor for BDNF/brain-derived neurotrophic factor and NTF4/neurotrophin-4. Alternatively can also bind NTF3/neurotrophin-3 which is less efficient in activating the receptor but regulates neuron survival through NTRK2. Upon ligand-binding, undergoes homodimerization, autophosphorylation and activation. Recruits, phosphorylates and/or activates several downstream effectors including SHC1, FRS2, SH2B1, SH2B2 and PLCG1 that regulate distinct overlapping signaling cascades. Through SHC1, FRS2, SH2B1, SH2B2 activates the GRB2-Ras-MAPK cascade that regulates for instance neuronal differentiation including neurite outgrowth. Through the same effectors controls the Ras-PI3 kinase-AKT1 signaling cascade that mainly regulates growth and survival. Through PLCG1 and the downstream protein kinase C-regulated pathways controls synaptic plasticity. Thereby, plays a role in learning and memory by regulating both short term synaptic function and long-term potentiation. PLCG1 also leads to NF-Kappa-B activation and the transcription of genes involved in cell survival. Hence, it is able to suppress anoikis, the apoptosis resulting from loss of cell-matrix interactions. May also play a role in neutrophin-dependent calcium signaling in glial cells and mediate communication between neurons and glia. This Gallus gallus (Chicken) protein is BDNF/NT-3 growth factors receptor (NTRK2).